The chain runs to 448 residues: Phosphoglucosamine mutase (448 aa).

Ser99 (phosphoserine intermediate) is an active-site residue. Mg(2+) is bound by residues Ser99, Asp238, Asp240, and Asp242. The residue at position 99 (Ser99) is a Phosphoserine.

It belongs to the phosphohexose mutase family. It depends on Mg(2+) as a cofactor. Post-translationally, activated by phosphorylation.

The enzyme catalyses alpha-D-glucosamine 1-phosphate = D-glucosamine 6-phosphate. Its function is as follows. Catalyzes the conversion of glucosamine-6-phosphate to glucosamine-1-phosphate. The protein is Phosphoglucosamine mutase of Marinomonas sp. (strain MWYL1).